We begin with the raw amino-acid sequence, 439 residues long: Packaging protein 1 (439 aa).

Positions 1-23 are enriched in polar residues; it reads MSTQIPARQETYDPSQSSGTKTP. The segment at 1 to 42 is disordered; the sequence is MSTQIPARQETYDPSQSSGTKTPSHPYDGNPTRSYPKRNAGK. An ATP-binding site is contributed by 151–158; it reads GPTGSGKS. Positions 419–439 are DNA-binding; sequence ERNPKLTDLEKLSPPGTFQET.

This sequence belongs to the adenoviridae packaging protein 1 family. As to quaternary structure, homodimer. Part of a genome packaging complex composed of packaging proteins 1, 2 and 3; this complex specifically binds to the packaging sequence on the left end of viral genomic DNA and performs packaging of the viral genome. Interacts with protein 33K.

It is found in the virion. Its subcellular location is the host nucleus. The protein localises to the host nucleoplasm. The protein resides in the host nucleolus. Its function is as follows. Component of the packaging machinery which encapsidates the viral DNA into preformed capsids and transcriptional activator of the viral major late promoter (MLP). Binds, along with packaging proteins 2 and 3, to the specific packaging sequence on the left end of viral genomic DNA and displays ATPase activity thereby providing the power stroke of the packaging machinery. The activity of packaging protein IVa2 is stimulated by protein 33K which acts as a terminase. May be the protein that pumps DNA into the capsid powered by ATP hydrolysis. Specifically binds to the 5'-CG-3' nucleotides of the repeats making up the packaging sequence. Component of the DEF-A and DEF-B transcription factors that bind downstream elements of the major late promoter (MLP), and stimulate transcription from the MLP after initiation of viral DNA replication. DEF-A is a heterodimer packaging proteins 1 and 2 and DEF-B is a homodimer of packaging protein 1. The sequence is that of Packaging protein 1 from Fowl adenovirus A serotype 1 (strain CELO / Phelps) (FAdV-1).